Consider the following 115-residue polypeptide: Putative membrane protein insertion efficiency factor (115 aa).

This sequence belongs to the UPF0161 family.

Its subcellular location is the cell membrane. In terms of biological role, could be involved in insertion of integral membrane proteins into the membrane. The polypeptide is Putative membrane protein insertion efficiency factor (Mycobacterium avium (strain 104)).